A 390-amino-acid chain; its full sequence is Probable L-tyrosine/L-aspartate decarboxylase (390 aa).

N6-(pyridoxal phosphate)lysine is present on Lys-239.

This sequence belongs to the group II decarboxylase family. MfnA subfamily. Pyridoxal 5'-phosphate serves as cofactor.

It carries out the reaction L-tyrosine + H(+) = tyramine + CO2. The enzyme catalyses L-aspartate + H(+) = beta-alanine + CO2. It functions in the pathway cofactor biosynthesis; methanofuran biosynthesis. Its pathway is cofactor biosynthesis; coenzyme A biosynthesis. Catalyzes the decarboxylation of L-tyrosine to produce tyramine for methanofuran biosynthesis. Can also catalyze the decarboxylation of L-aspartate to produce beta-alanine for coenzyme A (CoA) biosynthesis. The chain is Probable L-tyrosine/L-aspartate decarboxylase from Methanococcus aeolicus (strain ATCC BAA-1280 / DSM 17508 / OCM 812 / Nankai-3).